Consider the following 445-residue polypeptide: Argininosuccinate synthase (445 aa).

ATP contacts are provided by residues 17–25 and Ala43; that span reads AFSGGLDTS. Residue Tyr99 coordinates L-citrulline. Residues Gly129 and Thr131 each contribute to the ATP site. L-aspartate-binding residues include Thr131, Asn135, and Asp136. An L-citrulline-binding site is contributed by Asn135. Position 136 (Asp136) interacts with ATP. L-citrulline-binding residues include Arg139 and Ser192. Asp194 serves as a coordination point for ATP. L-citrulline-binding residues include Thr201, Glu203, and Glu280.

This sequence belongs to the argininosuccinate synthase family. Type 2 subfamily. As to quaternary structure, homotetramer.

It is found in the cytoplasm. The enzyme catalyses L-citrulline + L-aspartate + ATP = 2-(N(omega)-L-arginino)succinate + AMP + diphosphate + H(+). Its pathway is amino-acid biosynthesis; L-arginine biosynthesis; L-arginine from L-ornithine and carbamoyl phosphate: step 2/3. This is Argininosuccinate synthase (argG) from Burkholderia multivorans (strain ATCC 17616 / 249).